Consider the following 287-residue polypeptide: Proline iminopeptidase (287 aa).

Residues P22–E271 enclose the AB hydrolase-1 domain. S98 serves as the catalytic Nucleophile. Residue D238 is part of the active site. H265 acts as the Proton donor in catalysis.

The protein belongs to the peptidase S33 family.

It is found in the cell envelope. The enzyme catalyses Release of N-terminal proline from a peptide.. In terms of biological role, releases the N-terminal proline from various substrates. The chain is Proline iminopeptidase from Lactiplantibacillus plantarum (strain ATCC BAA-793 / NCIMB 8826 / WCFS1) (Lactobacillus plantarum).